A 562-amino-acid polypeptide reads, in one-letter code: T-complex protein 1 subunit epsilon (562 aa).

It belongs to the TCP-1 chaperonin family. Heterooligomeric complex of about 850 to 900 kDa that forms two stacked rings, 12 to 16 nm in diameter.

The protein localises to the cytoplasm. In terms of biological role, molecular chaperone; assists the folding of proteins upon ATP hydrolysis. Known to play a role, in vitro, in the folding of actin and tubulin. In yeast may play a role in mitotic spindle formation. In Saccharomyces cerevisiae (strain ATCC 204508 / S288c) (Baker's yeast), this protein is T-complex protein 1 subunit epsilon (CCT5).